A 61-amino-acid chain; its full sequence is UPF0434 protein Bfl377 (61 aa).

It belongs to the UPF0434 family.

The sequence is that of UPF0434 protein Bfl377 from Blochmanniella floridana.